We begin with the raw amino-acid sequence, 298 residues long: Lipoyl synthase (298 aa).

Residues cysteine 37, cysteine 42, cysteine 48, cysteine 63, cysteine 67, cysteine 70, and serine 277 each contribute to the [4Fe-4S] cluster site. The Radical SAM core domain occupies 49–266 (WGGGTATVML…KTLAESYGFL (218 aa)).

This sequence belongs to the radical SAM superfamily. Lipoyl synthase family. Requires [4Fe-4S] cluster as cofactor.

The protein localises to the cytoplasm. It carries out the reaction [[Fe-S] cluster scaffold protein carrying a second [4Fe-4S](2+) cluster] + N(6)-octanoyl-L-lysyl-[protein] + 2 oxidized [2Fe-2S]-[ferredoxin] + 2 S-adenosyl-L-methionine + 4 H(+) = [[Fe-S] cluster scaffold protein] + N(6)-[(R)-dihydrolipoyl]-L-lysyl-[protein] + 4 Fe(3+) + 2 hydrogen sulfide + 2 5'-deoxyadenosine + 2 L-methionine + 2 reduced [2Fe-2S]-[ferredoxin]. The protein operates within protein modification; protein lipoylation via endogenous pathway; protein N(6)-(lipoyl)lysine from octanoyl-[acyl-carrier-protein]: step 2/2. In terms of biological role, catalyzes the radical-mediated insertion of two sulfur atoms into the C-6 and C-8 positions of the octanoyl moiety bound to the lipoyl domains of lipoate-dependent enzymes, thereby converting the octanoylated domains into lipoylated derivatives. The sequence is that of Lipoyl synthase from Myxococcus xanthus (strain DK1622).